A 165-amino-acid polypeptide reads, in one-letter code: Protein SprT (165 aa).

One can recognise a SprT-like domain in the interval 22–163 (LAQANLKLGR…RCVHCGEQLT (142 aa)). Zn(2+) is bound at residue His78. The active site involves Glu79. His82 is a binding site for Zn(2+).

Belongs to the SprT family. Zn(2+) is required as a cofactor.

It localises to the cytoplasm. The polypeptide is Protein SprT (Escherichia fergusonii (strain ATCC 35469 / DSM 13698 / CCUG 18766 / IAM 14443 / JCM 21226 / LMG 7866 / NBRC 102419 / NCTC 12128 / CDC 0568-73)).